The sequence spans 460 residues: Bifunctional protein GlmU (460 aa).

Residues 1–232 (MALNVVILAA…AIEVEGANNR (232 aa)) are pyrophosphorylase. Residues 8–11 (LAAG), lysine 22, glutamine 73, 78–79 (GT), 100–102 (YGD), glycine 137, glutamate 157, asparagine 172, and asparagine 230 contribute to the UDP-N-acetyl-alpha-D-glucosamine site. Residue aspartate 102 coordinates Mg(2+). Residue asparagine 230 coordinates Mg(2+). The tract at residues 233–253 (VQLAQLERAYQAREAEKLMLA) is linker. An N-acetyltransferase region spans residues 254-460 (GANLRDPSRI…GWQRPVKIKK (207 aa)). UDP-N-acetyl-alpha-D-glucosamine-binding residues include arginine 336 and lysine 354. Residue histidine 366 is the Proton acceptor of the active site. UDP-N-acetyl-alpha-D-glucosamine is bound by residues tyrosine 369 and asparagine 380. Acetyl-CoA-binding positions include alanine 383, 389 to 390 (NY), serine 408, alanine 426, and arginine 443.

It in the N-terminal section; belongs to the N-acetylglucosamine-1-phosphate uridyltransferase family. This sequence in the C-terminal section; belongs to the transferase hexapeptide repeat family. In terms of assembly, homotrimer. Requires Mg(2+) as cofactor.

It localises to the cytoplasm. It carries out the reaction alpha-D-glucosamine 1-phosphate + acetyl-CoA = N-acetyl-alpha-D-glucosamine 1-phosphate + CoA + H(+). It catalyses the reaction N-acetyl-alpha-D-glucosamine 1-phosphate + UTP + H(+) = UDP-N-acetyl-alpha-D-glucosamine + diphosphate. It functions in the pathway nucleotide-sugar biosynthesis; UDP-N-acetyl-alpha-D-glucosamine biosynthesis; N-acetyl-alpha-D-glucosamine 1-phosphate from alpha-D-glucosamine 6-phosphate (route II): step 2/2. Its pathway is nucleotide-sugar biosynthesis; UDP-N-acetyl-alpha-D-glucosamine biosynthesis; UDP-N-acetyl-alpha-D-glucosamine from N-acetyl-alpha-D-glucosamine 1-phosphate: step 1/1. The protein operates within bacterial outer membrane biogenesis; LPS lipid A biosynthesis. Catalyzes the last two sequential reactions in the de novo biosynthetic pathway for UDP-N-acetylglucosamine (UDP-GlcNAc). The C-terminal domain catalyzes the transfer of acetyl group from acetyl coenzyme A to glucosamine-1-phosphate (GlcN-1-P) to produce N-acetylglucosamine-1-phosphate (GlcNAc-1-P), which is converted into UDP-GlcNAc by the transfer of uridine 5-monophosphate (from uridine 5-triphosphate), a reaction catalyzed by the N-terminal domain. The sequence is that of Bifunctional protein GlmU from Shewanella baltica (strain OS155 / ATCC BAA-1091).